A 274-amino-acid chain; its full sequence is Large ribosomal subunit protein uL2 (274 aa).

Residues 224-274 (VMNPVDHPHGGGEGRSPIGRNPVTPWGKPALGARTRKKKPGDRLIVKRRAR) are disordered. Residues 257–274 (RTRKKKPGDRLIVKRRAR) show a composition bias toward basic residues.

This sequence belongs to the universal ribosomal protein uL2 family. In terms of assembly, part of the 50S ribosomal subunit. Forms a bridge to the 30S subunit in the 70S ribosome.

Functionally, one of the primary rRNA binding proteins. Required for association of the 30S and 50S subunits to form the 70S ribosome, for tRNA binding and peptide bond formation. It has been suggested to have peptidyltransferase activity; this is somewhat controversial. Makes several contacts with the 16S rRNA in the 70S ribosome. The protein is Large ribosomal subunit protein uL2 of Pelotomaculum thermopropionicum (strain DSM 13744 / JCM 10971 / SI).